Here is a 268-residue protein sequence, read N- to C-terminus: Large ribosomal subunit protein mL46 (268 aa).

A mitochondrion-targeting transit peptide spans 1–25 (MYLKRNIINMQRSFSRQFHISVRNS).

The protein belongs to the mitochondrion-specific ribosomal protein mL46 family. In terms of assembly, component of the mitochondrial large ribosomal subunit (mt-LSU). Mature yeast 74S mitochondrial ribosomes consist of a small (37S) and a large (54S) subunit. The 37S small subunit contains a 15S ribosomal RNA (15S mt-rRNA) and at least 32 different proteins. The 54S large subunit contains a 21S rRNA (21S mt-rRNA) and at least 45 different proteins.

It localises to the mitochondrion. Its function is as follows. Component of the mitochondrial ribosome (mitoribosome), a dedicated translation machinery responsible for the synthesis of mitochondrial genome-encoded proteins, including at least some of the essential transmembrane subunits of the mitochondrial respiratory chain. The mitoribosomes are attached to the mitochondrial inner membrane and translation products are cotranslationally integrated into the membrane. The chain is Large ribosomal subunit protein mL46 (mrpl17) from Schizosaccharomyces pombe (strain 972 / ATCC 24843) (Fission yeast).